Consider the following 369-residue polypeptide: Ubiquinone biosynthesis O-methyltransferase, mitochondrial (369 aa).

A mitochondrion-targeting transit peptide spans 1–85 (MWSGRKLGSS…SFRYPWARLY (85 aa)). Position 124 (Arg-124) interacts with S-adenosyl-L-methionine. An N6-acetyllysine mark is found at Lys-143 and Lys-149. S-adenosyl-L-methionine is bound by residues Gly-154 and Asp-175. Lys-196 is modified (N6-acetyllysine). An S-adenosyl-L-methionine-binding site is contributed by Ser-222. Mg(2+)-binding residues include Glu-223, Glu-226, and His-227.

Belongs to the class I-like SAM-binding methyltransferase superfamily. UbiG/COQ3 family. In terms of assembly, component of a multi-subunit COQ enzyme complex, composed of at least COQ3, COQ4, COQ5, COQ6, COQ7 and COQ9. Requires Mg(2+) as cofactor.

The protein localises to the mitochondrion inner membrane. It carries out the reaction 3,4-dihydroxy-5-(all-trans-decaprenyl)benzoate + S-adenosyl-L-methionine = 4-hydroxy-3-methoxy-5-(all-trans-decaprenyl)benzoate + S-adenosyl-L-homocysteine + H(+). It catalyses the reaction a 3-demethylubiquinone + S-adenosyl-L-methionine = a ubiquinone + S-adenosyl-L-homocysteine. The enzyme catalyses 3-demethylubiquinol-10 + S-adenosyl-L-methionine = ubiquinol-10 + S-adenosyl-L-homocysteine + H(+). The protein operates within cofactor biosynthesis; ubiquinone biosynthesis. In terms of biological role, O-methyltransferase required for two non-consecutive steps during ubiquinone biosynthesis. Catalyzes the 2 O-methylation of 3,4-dihydroxy-5-(all-trans-decaprenyl)benzoic acid into 4-hydroxy-3-methoxy-5-(all-trans-decaprenyl)benzoic acid. Also catalyzes the last step of ubiquinone biosynthesis by mediating methylation of 3-demethylubiquinone into ubiquinone. Also able to mediate the methylation of 3-demethylubiquinol-10 into ubiquinol-10. The polypeptide is Ubiquinone biosynthesis O-methyltransferase, mitochondrial (Homo sapiens (Human)).